We begin with the raw amino-acid sequence, 179 residues long: TPD1 protein homolog 1 (179 aa).

Positions 1–30 (MRMEHIYKFQHWLFFIGLGVLLSLSLSVKA) are cleaved as a signal peptide.

This is TPD1 protein homolog 1 from Arabidopsis thaliana (Mouse-ear cress).